Consider the following 333-residue polypeptide: Glyceraldehyde-3-phosphate dehydrogenase (333 aa).

An N-acetylserine modification is found at Ser-1. NAD(+) is bound by residues 10–11 (RI), Asp-31, and Met-76. Residues 147 to 149 (SCT), Thr-178, 207 to 208 (TG), and Arg-230 contribute to the D-glyceraldehyde 3-phosphate site. Cys-148 serves as the catalytic Nucleophile. Asn-312 provides a ligand contact to NAD(+).

Belongs to the glyceraldehyde-3-phosphate dehydrogenase family. Homotetramer.

The protein resides in the cytoplasm. The enzyme catalyses D-glyceraldehyde 3-phosphate + phosphate + NAD(+) = (2R)-3-phospho-glyceroyl phosphate + NADH + H(+). The protein operates within carbohydrate degradation; glycolysis; pyruvate from D-glyceraldehyde 3-phosphate: step 1/5. This is Glyceraldehyde-3-phosphate dehydrogenase from Panulirus versicolor (Painted spiny lobster).